The primary structure comprises 766 residues: ABC-type oligopeptide transporter ABCB9 (766 aa).

The next 8 membrane-spanning stretches (helical) occupy residues 7–27 (VVVTLAFMSVDICVTTAIYVF), 47–67 (VLDLWAACLYRSCLLLGATIG), 84–104 (LVITLVCLFVGIYAMVKLLLF), 116–136 (FWALFVWTYISLGASFLLWWL), 185–205 (VAFLVAASFFLIVAALGETFL), 225–245 (FSTAVVIVCLLAIGSSFAAGI), 319–339 (VFMFSLSWQLSLVTFMGFPII), and 416–436 (SGLTLLVVQVSILYYGGHLVI). The ABC transmembrane type-1 domain maps to 188 to 471 (LVAASFFLIV…VGSVYSGLMQ (284 aa)). Residues 504–740 (VDFENVTFTY…GGLYAKLVQR (237 aa)) enclose the ABC transporter domain. 539–546 (GPSGSGKS) provides a ligand contact to ATP.

The protein belongs to the ABC transporter superfamily. ABCB family. MHC peptide exporter (TC 3.A.1.209) subfamily. As to quaternary structure, homodimer. Interacts (via TMD0 region) with LAMP1; this interaction strongly stabilizes ABCB9 and protects ABCB9 against lysosomal degradation. Interacts (via TMD0 region) with LAMP2 (isoform LAMP-2B). Interacts (via TMD0) with YIF1B; this interaction allows (but is not essential) the ER-to-Golgi trafficking and strongly depends on a salt bridge within TMD0. As to expression, highly expressed in testis, and at moderate levels in brain, spinal cord, and thyroid. Not expressed in monocytes but strongly expressed during differentiation of monocytes to dendritic cells and macrophages.

It is found in the lysosome membrane. It catalyses the reaction a [oligopeptide](in) + ATP + H2O = a [oligopeptide](out) + ADP + phosphate + H(+). With respect to regulation, transport activity is limited by threshold levels of luminal peptide. ATP hydrolysis is reduced in the presence of the spatial challenging 18-mer peptide by 50% and the branched 16-mer peptide by 75%. Transport rate of the longer peptides is strongly reduced. Its function is as follows. ATP-dependent low-affinity peptide transporter which translocates a broad spectrum of peptides from the cytosol to the lysosomal lumen for degradation. Displays a broad peptide length specificity from 6-mer up to at least 59-mer peptides with an optimum of 23-mers. Binds and transports smaller and larger peptides with the same affinity. Favors positively charged, aromatic or hydrophobic residues in the N- and C-terminal positions whereas negatively charged residues as well as asparagine and methionine are not favored. This is ABC-type oligopeptide transporter ABCB9 from Homo sapiens (Human).